A 566-amino-acid chain; its full sequence is Oxygen-dependent choline dehydrogenase (566 aa).

Asp7 to Glu36 is a binding site for FAD. The segment at Asn180–Ser202 is disordered. His474 (proton acceptor) is an active-site residue.

The protein belongs to the GMC oxidoreductase family. Requires FAD as cofactor.

The catalysed reaction is choline + A = betaine aldehyde + AH2. It carries out the reaction betaine aldehyde + NAD(+) + H2O = glycine betaine + NADH + 2 H(+). It participates in amine and polyamine biosynthesis; betaine biosynthesis via choline pathway; betaine aldehyde from choline (cytochrome c reductase route): step 1/1. Functionally, involved in the biosynthesis of the osmoprotectant glycine betaine. Catalyzes the oxidation of choline to betaine aldehyde and betaine aldehyde to glycine betaine at the same rate. The polypeptide is Oxygen-dependent choline dehydrogenase (Burkholderia lata (strain ATCC 17760 / DSM 23089 / LMG 22485 / NCIMB 9086 / R18194 / 383)).